A 292-amino-acid chain; its full sequence is Phosphoribulokinase, chromosomal (292 aa).

An ATP-binding site is contributed by 12-20; the sequence is GSSGAGTTS.

The protein belongs to the phosphoribulokinase family. In terms of assembly, homooctamer.

It catalyses the reaction D-ribulose 5-phosphate + ATP = D-ribulose 1,5-bisphosphate + ADP + H(+). It functions in the pathway carbohydrate biosynthesis; Calvin cycle. The chain is Phosphoribulokinase, chromosomal (cfxP) from Cupriavidus necator (strain ATCC 17699 / DSM 428 / KCTC 22496 / NCIMB 10442 / H16 / Stanier 337) (Ralstonia eutropha).